The primary structure comprises 588 residues: Transcriptional regulatory protein ASH1 (588 aa).

The residue at position 56 (Ser56) is a Phosphoserine. 3 disordered regions span residues 85 to 109 (SNTAPASPHHMDYNPISSLTPGNSP), 377 to 398 (SNNSKSNVRKPSKNKISKQASN), and 417 to 495 (SSVS…TRHT). Positions 99-109 (PISSLTPGNSP) are enriched in polar residues. The span at 383–392 (NVRKPSKNKI) shows a compositional bias: basic residues. A compositionally biased stretch (low complexity) spans 417 to 433 (SSVSASSSPSPSTPTKS). Residue Ser465 is modified to Phosphoserine. Low complexity predominate over residues 470–493 (PRRSSNSSITKKGSRRSSGSSPTR). A GATA-type; atypical zinc finger spans residues 499 to 526 (CVSCHSSDSPCWRPSWSPRKQDQLCNSC).

In terms of assembly, component of the RPD3C(L) complex composed of at least ASH1, CTI6, DEP1, PHO23, RPD3, RXT2, RXT3, SAP30, SDS3, SIN3, UME1 and UME6.

The protein localises to the nucleus. Its function is as follows. Component of the RPD3C(L) histone deacetylase complex (HDAC). Responsible for the deacetylation of lysine residues on the N-terminal part of the core histones (H2A, H2B, H3 and H4). Histone deacetylation gives a tag for epigenetic repression and plays an important role in transcriptional regulation, cell cycle progression and developmental events. ASH1 is necessary to repress HO in daughter cells to block mating-type switching through its binding to HO promoter 5'-YTGAT-3' sites. Also involved in pseudohyphal growth. The chain is Transcriptional regulatory protein ASH1 (ASH1) from Saccharomyces cerevisiae (strain ATCC 204508 / S288c) (Baker's yeast).